Consider the following 223-residue polypeptide: Ribonuclease 3 (223 aa).

An RNase III domain is found at 4-127; it reads LNRLEEHLGY…LMGAIYLESG (124 aa). Position 40 (Glu-40) interacts with Mg(2+). Asp-44 is an active-site residue. 2 residues coordinate Mg(2+): Asp-113 and Glu-116. Glu-116 is a catalytic residue. A DRBM domain is found at 154-223; it reads DYKTTLQEIT…AWKVLQGMNI (70 aa).

This sequence belongs to the ribonuclease III family. Homodimer. The cofactor is Mg(2+).

Its subcellular location is the cytoplasm. It catalyses the reaction Endonucleolytic cleavage to 5'-phosphomonoester.. In terms of biological role, digests double-stranded RNA. Involved in the processing of primary rRNA transcript to yield the immediate precursors to the large and small rRNAs (23S and 16S). Processes some mRNAs, and tRNAs when they are encoded in the rRNA operon. Processes pre-crRNA and tracrRNA of type II CRISPR loci if present in the organism. This Campylobacter fetus subsp. fetus (strain 82-40) protein is Ribonuclease 3.